Reading from the N-terminus, the 656-residue chain is PAN2-PAN3 deadenylation complex subunit PAN3 (656 aa).

The C3H1-type zinc finger occupies 15–44 (SFKGTQCRNIIIHGYCKFENEGCQFNHGNS). The interval 71 to 104 (KTSSSFTPGKSPAVRSPDFSSLPAFQPGAPVNDQ) is disordered. The short motif at 128–148 (AFAPSFNPYASESFTPSVSAG) is the PABPC-interacting motif-2 (PAM-2) element. Positions 271-525 (QVFPRGSLPD…NIEDFTKLFS (255 aa)) are pseudokinase domain. ATP-binding positions include arginine 325, 375-382 (DYYPQSQS), and 428-429 (KK). Positions 526 to 564 (HKVLSVVNSLQYNSEYLEQQLSRELENARLFRLMCKLNA) form a coiled coil. The segment at 565–656 (IYGRLESRID…IDSTFRALTQ (92 aa)) is knob domain.

Belongs to the protein kinase superfamily. PAN3 family. In terms of assembly, homodimer. Forms a heterotrimer with a catalytic subunit PAN2 to form the poly(A)-nuclease (PAN) deadenylation complex. Interacts (via PAM-2 motif) with poly(A)-binding protein PAB1 (via PABC domain), conferring substrate specificity of the enzyme complex.

The protein localises to the cytoplasm. In terms of biological role, regulatory subunit of the poly(A)-nuclease (PAN) deadenylation complex, one of two cytoplasmic mRNA deadenylases involved in mRNA turnover. PAN specifically shortens poly(A) tails of RNA and the activity is stimulated by poly(A)-binding protein PAB1. PAN deadenylation is followed by rapid degradation of the shortened mRNA tails by the CCR4-NOT complex. Deadenylated mRNAs are then degraded by two alternative mechanisms, namely exosome-mediated 3'-5' exonucleolytic degradation, or deadenylation-dependent mRNA decaping and subsequent 5'-3' exonucleolytic degradation by XRN1. May also be involved in post-transcriptional maturation of mRNA poly(A) tails. PAN3 acts as a positive regulator for PAN activity, recruiting the catalytic subunit PAN2 to mRNA via its interaction with RNA and with PAB1. The sequence is that of PAN2-PAN3 deadenylation complex subunit PAN3 from Kluyveromyces lactis (strain ATCC 8585 / CBS 2359 / DSM 70799 / NBRC 1267 / NRRL Y-1140 / WM37) (Yeast).